The following is a 122-amino-acid chain: Bet1-like SNARE 1-1 (122 aa).

Topologically, residues M1 to M103 are cytoplasmic. Residues E32–V94 enclose the t-SNARE coiled-coil homology domain. The residue at position 56 (S56) is a Phosphoserine. A helical; Anchor for type IV membrane protein membrane pass occupies residues L104–T121. R122 is a topological domain (vesicular).

The protein belongs to the BET1 family.

Its subcellular location is the golgi apparatus membrane. The protein localises to the endoplasmic reticulum membrane. Its function is as follows. Required for vesicular transport from the ER to the Golgi complex. Functions as a SNARE associated with ER-derived vesicles. The protein is Bet1-like SNARE 1-1 (BET11) of Arabidopsis thaliana (Mouse-ear cress).